The primary structure comprises 355 residues: Uroporphyrinogen decarboxylase (355 aa).

Residues 27 to 31 (RQAGR), phenylalanine 46, aspartate 77, tyrosine 154, threonine 209, and histidine 328 contribute to the substrate site.

It belongs to the uroporphyrinogen decarboxylase family. In terms of assembly, homodimer.

It is found in the cytoplasm. The enzyme catalyses uroporphyrinogen III + 4 H(+) = coproporphyrinogen III + 4 CO2. Its pathway is porphyrin-containing compound metabolism; protoporphyrin-IX biosynthesis; coproporphyrinogen-III from 5-aminolevulinate: step 4/4. Catalyzes the decarboxylation of four acetate groups of uroporphyrinogen-III to yield coproporphyrinogen-III. This Vibrio vulnificus (strain CMCP6) protein is Uroporphyrinogen decarboxylase.